Reading from the N-terminus, the 274-residue chain is Halorhodopsin (274 aa).

Positions methionine 1–alanine 21 are excised as a propeptide. The Extracellular portion of the chain corresponds to alanine 22–glutamate 25. The helical transmembrane segment at asparagine 26–glycine 51 threads the bilayer. At arginine 52–glycine 57 the chain is on the cytoplasmic side. Residues arginine 58 to leucine 81 traverse the membrane as a helical segment. Over serine 82–glutamine 105 the chain is Extracellular. The chloride site is built by glutamine 105, threonine 111, and serine 115. The helical transmembrane segment at tryptophan 106–alanine 127 threads the bilayer. The Cytoplasmic segment spans residues aspartate 128–aspartate 130. A helical transmembrane segment spans residues leucine 131–threonine 154. The Extracellular segment spans residues threonine 155 to alanine 157. The helical transmembrane segment at leucine 158–valine 180 threads the bilayer. Topologically, residues threonine 181–threonine 192 are cytoplasmic. A helical transmembrane segment spans residues alanine 193–valine 216. Topologically, residues glycine 217–serine 226 are extracellular. A helical transmembrane segment spans residues valine 227 to asparagine 255. Lysine 242 bears the N6-(retinylidene)lysine mark. Residues asparagine 256–aspartate 274 lie on the Cytoplasmic side of the membrane.

It belongs to the archaeal/bacterial/fungal opsin family. As to quaternary structure, homotrimer.

The protein localises to the cell membrane. Light-driven chloride pump. The polypeptide is Halorhodopsin (hop) (Halobacterium salinarum (strain ATCC 29341 / DSM 671 / R1)).